A 369-amino-acid chain; its full sequence is uncharacterized protein (369 aa).

4 disordered regions span residues 1–42 (MRAA…NNNS), 60–107 (PSDL…KEDD), 146–177 (ALSM…NSSG), and 214–369 (LSSH…GDDD). The span at 12–24 (VGPNNNNQSNTIN) shows a compositional bias: polar residues. Composition is skewed to low complexity over residues 30 to 42 (SNSN…NNNS) and 70 to 86 (YHSN…NSSS). The segment covering 87-101 (AITSGTVAPSSSMNN) has biased composition (polar residues). A compositionally biased stretch (acidic residues) spans 155–169 (DSESDISEKEDDNDG). The segment covering 219–324 (NNNNNSSNNN…NNNNNNSNIY (106 aa)) has biased composition (low complexity).

This is an uncharacterized protein from Dictyostelium discoideum (Social amoeba).